Consider the following 141-residue polypeptide: Nucleoside diphosphate kinase (141 aa).

Residues Lys-11, Phe-59, Arg-87, Thr-93, Arg-104, and Asn-114 each contribute to the ATP site. The active-site Pros-phosphohistidine intermediate is the His-117.

Belongs to the NDK family. As to quaternary structure, homotetramer. Mg(2+) is required as a cofactor.

Its subcellular location is the cytoplasm. It carries out the reaction a 2'-deoxyribonucleoside 5'-diphosphate + ATP = a 2'-deoxyribonucleoside 5'-triphosphate + ADP. The enzyme catalyses a ribonucleoside 5'-diphosphate + ATP = a ribonucleoside 5'-triphosphate + ADP. Functionally, major role in the synthesis of nucleoside triphosphates other than ATP. The ATP gamma phosphate is transferred to the NDP beta phosphate via a ping-pong mechanism, using a phosphorylated active-site intermediate. The polypeptide is Nucleoside diphosphate kinase (Pseudomonas putida (strain GB-1)).